Here is a 429-residue protein sequence, read N- to C-terminus: uncharacterized protein (429 aa).

Residues S116, D179, and H206 each act as charge relay system in the active site.

Belongs to the AB hydrolase 3 family.

It is found in the cytoplasm. The protein resides in the nucleus. This is an uncharacterized protein from Schizosaccharomyces pombe (strain 972 / ATCC 24843) (Fission yeast).